Consider the following 148-residue polypeptide: FAD synthase (148 aa).

Residues 14 to 15, 19 to 22, and D100 contribute to the ATP site; these read VF and HVGH.

The protein belongs to the archaeal FAD synthase family. In terms of assembly, homodimer. A divalent metal cation is required as a cofactor.

The enzyme catalyses FMN + ATP + H(+) = FAD + diphosphate. Its pathway is cofactor biosynthesis; FAD biosynthesis; FAD from FMN: step 1/1. In terms of biological role, catalyzes the transfer of the AMP portion of ATP to flavin mononucleotide (FMN) to produce flavin adenine dinucleotide (FAD) coenzyme. The protein is FAD synthase of Thermococcus sibiricus (strain DSM 12597 / MM 739).